A 478-amino-acid polypeptide reads, in one-letter code: Cytochrome c biogenesis protein CcsB (478 aa).

A run of 3 helical transmembrane segments spans residues 30–50 (LRLAIGLFLAIALLSAVGTVI), 89–109 (TSWFLALLILFGSSLAACSLT), and 175–195 (FGPILVHVSLLLILLGAIWGS). The disordered stretch occupies residues 453–478 (LSSPPSPAKEPPPAARVGGTESLANG). Residues 456 to 466 (PPSPAKEPPPA) are compositionally biased toward pro residues.

The protein belongs to the Ccs1/CcsB family. May interact with CcsA.

It localises to the cellular thylakoid membrane. Functionally, required during biogenesis of c-type cytochromes (cytochrome c6 and cytochrome f) at the step of heme attachment. This is Cytochrome c biogenesis protein CcsB from Synechococcus sp. (strain JA-3-3Ab) (Cyanobacteria bacterium Yellowstone A-Prime).